Reading from the N-terminus, the 91-residue chain is Thioredoxin (91 aa).

Residues 2 to 91 (SDSIVHVTDD…SRQSEVEATK (90 aa)) enclose the Thioredoxin domain. The cysteines at positions 33 and 36 are disulfide-linked.

The protein belongs to the thioredoxin family.

Participates in various redox reactions through the reversible oxidation of its active center dithiol to a disulfide and catalyzes dithiol-disulfide exchange reactions. This chain is Thioredoxin (trxA), found in Thiocapsa roseopersicina.